The primary structure comprises 300 residues: Cell surface glycoprotein CD200 receptor 1-A (300 aa).

Residues 1–24 (MEIAGKAVCVFLLLAIIKLRRSEG) form the signal peptide. The Ig-like V-type domain maps to 25-124 (INRVSANLGH…GNFHRLYHLT (100 aa)). Over 25 to 213 (INRVSANLGH…SINCSSSYRD (189 aa)) the chain is Extracellular. Intrachain disulfides connect cysteine 40-cysteine 108 and cysteine 143-cysteine 192. 6 N-linked (GlcNAc...) asparagine glycosylation sites follow: asparagine 45, asparagine 76, asparagine 105, asparagine 171, asparagine 200, and asparagine 206. Residues 122-206 (HLTVIVAPRM…ATLNETKSIN (85 aa)) enclose the Ig-like C2-type domain. The helical transmembrane segment at 214 to 234 (LILCIAIILSFLIIITFMAVI) threads the bilayer. Residues 235–300 (YYLKLHGCRF…NLPQGQSPAT (66 aa)) are Cytoplasmic-facing.

This sequence belongs to the CD200R family. Post-translationally, glycosylated. In terms of processing, phosphorylated. Highly expressed in macrophages, peripheral blood lymphocytes (PBL) and peripheral blood mononuclear cells (PBMC). Weakly expressed in bursa, thymus, spleen, liver and brain.

Its subcellular location is the membrane. It localises to the secreted. The protein is Cell surface glycoprotein CD200 receptor 1-A (CD200R1A) of Gallus gallus (Chicken).